The primary structure comprises 183 residues: Regulatory protein RecX (183 aa).

The span at 1–12 (MTSFPHPSTSES) shows a compositional bias: polar residues. The disordered stretch occupies residues 1 to 26 (MTSFPHPSTSESGPDPDSEPNREEQA).

It belongs to the RecX family.

Its subcellular location is the cytoplasm. Modulates RecA activity. This is Regulatory protein RecX from Mycobacterium sp. (strain KMS).